Consider the following 114-residue polypeptide: Nucleoid-associated protein Tlet_0999 (114 aa).

This sequence belongs to the YbaB/EbfC family. As to quaternary structure, homodimer.

The protein resides in the cytoplasm. The protein localises to the nucleoid. Its function is as follows. Binds to DNA and alters its conformation. May be involved in regulation of gene expression, nucleoid organization and DNA protection. The chain is Nucleoid-associated protein Tlet_0999 from Pseudothermotoga lettingae (strain ATCC BAA-301 / DSM 14385 / NBRC 107922 / TMO) (Thermotoga lettingae).